A 262-amino-acid polypeptide reads, in one-letter code: uncharacterized protein (262 aa).

Residues 6–70 (LRINQFLAHY…LKNKKFSVLV (65 aa)) form the S4 RNA-binding domain. Residue Asp108 is the Nucleophile of the active site.

The protein belongs to the pseudouridine synthase RsuA family.

It catalyses the reaction a uridine in RNA = a pseudouridine in RNA. This is an uncharacterized protein from Helicobacter pylori (strain J99 / ATCC 700824) (Campylobacter pylori J99).